A 256-amino-acid chain; its full sequence is Protein crossbronx-like (256 aa).

Residues 17–179 (NQGYKVLAEY…AKVSILWSCQ (163 aa)) enclose the UBC core domain.

This sequence belongs to the ubiquitin-conjugating enzyme family. FTS subfamily.

This chain is Protein crossbronx-like, found in Drosophila virilis (Fruit fly).